We begin with the raw amino-acid sequence, 308 residues long: Porphobilinogen deaminase (308 aa).

Residue Cys241 is modified to S-(dipyrrolylmethanemethyl)cysteine.

It belongs to the HMBS family. In terms of assembly, monomer. Dipyrromethane serves as cofactor.

It carries out the reaction 4 porphobilinogen + H2O = hydroxymethylbilane + 4 NH4(+). The protein operates within porphyrin-containing compound metabolism; protoporphyrin-IX biosynthesis; coproporphyrinogen-III from 5-aminolevulinate: step 2/4. Tetrapolymerization of the monopyrrole PBG into the hydroxymethylbilane pre-uroporphyrinogen in several discrete steps. In Staphylococcus saprophyticus subsp. saprophyticus (strain ATCC 15305 / DSM 20229 / NCIMB 8711 / NCTC 7292 / S-41), this protein is Porphobilinogen deaminase.